The primary structure comprises 591 residues: Formate--tetrahydrofolate ligase (591 aa).

74–81 (TPLGEGKS) serves as a coordination point for ATP.

Belongs to the formate--tetrahydrofolate ligase family.

It carries out the reaction (6S)-5,6,7,8-tetrahydrofolate + formate + ATP = (6R)-10-formyltetrahydrofolate + ADP + phosphate. It participates in one-carbon metabolism; tetrahydrofolate interconversion. In Desulfovibrio desulfuricans (strain ATCC 27774 / DSM 6949 / MB), this protein is Formate--tetrahydrofolate ligase.